We begin with the raw amino-acid sequence, 927 residues long: Sodium/calcium exchanger 3 (927 aa).

A signal peptide spans 1 to 30; the sequence is MAWLRLQPLTSAFLHFGLVTFVLFLNGLRA. At 31 to 73 the chain is on the extracellular side; the sequence is EAGGSGDVPSTGQNNESCSGSSDCKEGVILPIWYPENPSLGDK. Residue Asn45 is glycosylated (N-linked (GlcNAc...) asparagine). The chain crosses the membrane as a helical span at residues 74-94; it reads IARVIVYFVALIYMFLGVSII. The Cytoplasmic portion of the chain corresponds to 95 to 147; sequence ADRFMASIEVITSQEREVTIKKPNGETSTTTIRVWNETVSNLTLMALGSSAPE. An Alpha-1 repeat occupies 140 to 180; the sequence is ALGSSAPEILLSLIEVCGHGFIAGDLGPSTIVGSAAFNMFI. A helical membrane pass occupies residues 148-168; sequence ILLSLIEVCGHGFIAGDLGPS. Position 169 (Thr169) is a topological domain, extracellular. The helical transmembrane segment at 170-190 threads the bilayer; that stretch reads IVGSAAFNMFIIIGICVYVIP. Residues 191 to 202 are Cytoplasmic-facing; the sequence is DGETRKIKHLRV. Residues 203–223 form a helical membrane-spanning segment; it reads FFITAAWSIFAYIWLYMILAV. Over 224 to 230 the chain is Extracellular; sequence FSPGVVQ. A helical membrane pass occupies residues 231-251; the sequence is VWEGLLTLFFFPVCVLLAWVA. Residues 252–726 lie on the Cytoplasmic side of the membrane; the sequence is DKRLLFYKYM…DESGEERLPS (475 aa). Positions 253-272 are putative calmodulin-binding region; that stretch reads KRLLFYKYMHKKYRTDKHRG. 2 consecutive Calx-beta domains span residues 386–485 and 519–619; these read VHTD…VRLS and ATVT…IALG. Positions 409, 445, 470, 471, 473, 475, 478, 525, 526, 527, 543, 579, 606, 607, and 672 each coordinate Ca(2+). A helical transmembrane segment spans residues 727-747; it reads CFDYVMHFLTVFWKVLFACVP. The Extracellular segment spans residues 748–754; it reads PTEYCHG. Residues 755-775 traverse the membrane as a helical segment; that stretch reads WACFAVSILIIGMLTAIIGDL. Residues 776–778 are Cytoplasmic-facing; the sequence is ASH. The chain crosses the membrane as a helical span at residues 779 to 799; the sequence is FGCTIGLKDSVTAVVFVAFGT. The Alpha-2 repeat unit spans residues 796–832; the sequence is AFGTSVPDTFASKAAALQDVYADASIGNVTGSNAVNV. Residues 800 to 828 lie on the Extracellular side of the membrane; that stretch reads SVPDTFASKAAALQDVYADASIGNVTGSN. The N-linked (GlcNAc...) asparagine glycan is linked to Asn823. A helical transmembrane segment spans residues 829–849; that stretch reads AVNVFLGIGLAWSVAAIYWAL. The Cytoplasmic portion of the chain corresponds to 850–860; it reads QGQEFHVSAGT. A helical transmembrane segment spans residues 861-881; it reads LAFSVTLFTIFAFVCISVLLY. At 882-903 the chain is on the extracellular side; sequence RRRPHLGGELGGPRGCKLATTW. The helical transmembrane segment at 904–924 threads the bilayer; it reads LFVSLWLLYILFATLEAYCYI. At 925 to 927 the chain is on the cytoplasmic side; sequence KGF.

Belongs to the Ca(2+):cation antiporter (CaCA) (TC 2.A.19) family. SLC8 subfamily. Interacts with AKAP1. Isoform 2 is expressed in brain and skeletal muscle. Isoform 3 is expressed in excitable cells of brain, retina and skeletal muscle. Isoform 4 is expressed in skeletal muscle.

Its subcellular location is the cell membrane. The protein resides in the perikaryon. It localises to the cell projection. It is found in the dendrite. The protein localises to the dendritic spine. Its subcellular location is the sarcolemma. The protein resides in the cytoplasm. It localises to the sarcoplasm. It is found in the cell junction. The protein localises to the mitochondrion outer membrane. Its subcellular location is the perinuclear region. The protein resides in the endoplasmic reticulum membrane. The enzyme catalyses Ca(2+)(in) + 3 Na(+)(out) = Ca(2+)(out) + 3 Na(+)(in). Calcium transport is down-regulated by Na(+) and stimulated by Ca(2+). Its function is as follows. Mediates the electrogenic exchange of Ca(2+) against Na(+) ions across the cell membrane, and thereby contributes to the regulation of cytoplasmic Ca(2+) levels and Ca(2+)-dependent cellular processes. Contributes to cellular Ca(2+) homeostasis in excitable cells, both in muscle and in brain. In a first phase, voltage-gated channels mediate the rapid increase of cytoplasmic Ca(2+) levels due to release of Ca(2+) stores from the endoplasmic reticulum. SLC8A3 mediates the export of Ca(2+) from the cell during the next phase, so that cytoplasmic Ca(2+) levels rapidly return to baseline. Contributes to Ca(2+) transport during excitation-contraction coupling in muscle. In neurons, contributes to the rapid decrease of cytoplasmic Ca(2+) levels back to baseline after neuronal activation, and thereby contributes to modulate synaptic plasticity, learning and memory. Required for normal oligodendrocyte differentiation and for normal myelination. Mediates Ca(2+) efflux from mitochondria and contributes to mitochondrial Ca(2+) ion homeostasis. The protein is Sodium/calcium exchanger 3 (SLC8A3) of Homo sapiens (Human).